Here is a 250-residue protein sequence, read N- to C-terminus: NADH-quinone oxidoreductase subunit B 2 (250 aa).

The [4Fe-4S] cluster site is built by Cys-41, Cys-42, Cys-107, and Cys-137.

It belongs to the complex I 20 kDa subunit family. In terms of assembly, NDH-1 is composed of 14 different subunits. Subunits NuoB, C, D, E, F, and G constitute the peripheral sector of the complex. [4Fe-4S] cluster is required as a cofactor.

The protein localises to the cell membrane. It catalyses the reaction a quinone + NADH + 5 H(+)(in) = a quinol + NAD(+) + 4 H(+)(out). Functionally, NDH-1 shuttles electrons from NADH, via FMN and iron-sulfur (Fe-S) centers, to quinones in the respiratory chain. The immediate electron acceptor for the enzyme in this species is believed to be ubiquinone. Couples the redox reaction to proton translocation (for every two electrons transferred, four hydrogen ions are translocated across the cytoplasmic membrane), and thus conserves the redox energy in a proton gradient. In Herpetosiphon aurantiacus (strain ATCC 23779 / DSM 785 / 114-95), this protein is NADH-quinone oxidoreductase subunit B 2.